The primary structure comprises 1653 residues: Protein TOPAZ1 (1653 aa).

5 disordered regions span residues 1-88 (MPRA…PGID), 212-238 (GCMHVPENSSKSKKENPRSLIDKTDPS), 553-591 (KMKSEELSRSASEVVSNTTEDTSLTNMTHNLTGSKKKDR), 855-893 (PNVAEEHQSTDSKHMELPDKKEPSNALRELPVPDPGSMK), and 919-942 (EVTHETSSNEKPRGLSEQTKSSDL). Basic and acidic residues-rich tracts occupy residues 58 to 69 (SGREEVESDKSA) and 221 to 236 (SKSKKENPRSLIDKTD). Residues 561–585 (RSASEVVSNTTEDTSLTNMTHNLTG) show a composition bias toward polar residues. 2 stretches are compositionally biased toward basic and acidic residues: residues 858-877 (AEEHQSTDSKHMELPDKKEP) and 920-942 (VTHETSSNEKPRGLSEQTKSSDL).

It is found in the cytoplasm. Its subcellular location is the cytosol. Important for normal spermatogenesis and male fertility. Specifically required for progression to the post-meiotic stages of spermatocyte development. Seems to be necessary for normal expression levels of a number of testis-expressed gene transcripts, although its role in this process is unclear. This chain is Protein TOPAZ1 (TOPAZ1), found in Bos taurus (Bovine).